The sequence spans 262 residues: Small ribosomal subunit protein eS4 (262 aa).

Positions 42-104 (LPLILILRNR…TNEDFRLLYD (63 aa)) constitute an S4 RNA-binding domain.

Belongs to the eukaryotic ribosomal protein eS4 family.

Its subcellular location is the cytoplasm. This chain is Small ribosomal subunit protein eS4 (RPS4), found in Gossypium hirsutum (Upland cotton).